A 547-amino-acid polypeptide reads, in one-letter code: Phospholipase DDHD1 (547 aa).

The active site involves serine 184. In terms of domain architecture, DDHD spans 258–533 (LKFKVENFFC…ALFLLTFMYK (276 aa)). Serine 370 is modified (phosphoserine). Residues 414 to 448 (RSSASQPSEPSKDSLEDDKKPSASPSTTTVATQTL) are disordered. Over residues 423 to 434 (PSKDSLEDDKKP) the composition is skewed to basic and acidic residues. Over residues 435 to 448 (SASPSTTTVATQTL) the composition is skewed to low complexity.

It belongs to the PA-PLA1 family. As to quaternary structure, forms homooligomers and, to a much smaller extent, heterooligomers with DDHD2. Interacts with SEC23A and SEC24C. Predominantly expressed in testis, in round and elongating spermatids, but not in spermatocytes (at protein level). Also expressed in the brain, and at lower levels in other tissues such as thymus and lung (at protein level).

The protein localises to the cytoplasm. It catalyses the reaction a 1,2-diacyl-sn-glycero-3-phosphate + H2O = a 2-acyl-sn-glycerol 3-phosphate + a fatty acid + H(+). The enzyme catalyses a 1,2-diacyl-sn-glycero-3-phospho-(1D-myo-inositol) + H2O = a 2-acyl-sn-glycero-3-phospho-D-myo-inositol + a fatty acid + H(+). It carries out the reaction 1-octadecanoyl-2-(5Z,8Z,11Z,14Z-eicosatetraenoyl)-sn-glycero-3-phospho-(1D-myo-inositol) + H2O = 2-(5Z,8Z,11Z,14Z-eicosatetraenoyl)-sn-glycero-3-phospho-(1D-myo-inositol) + octadecanoate + H(+). The catalysed reaction is a 1-acyl-2-(5Z,8Z,11Z,14Z-eicosatetraenoyl)-sn-glycero-3-phospho-(1D-myo-inositol) + H2O = 2-(5Z,8Z,11Z,14Z-eicosatetraenoyl)-sn-glycero-3-phospho-(1D-myo-inositol) + a fatty acid + H(+). It catalyses the reaction 1,2-dihexadecanoyl-sn-glycero-3-phospho-(1D-myo-inositol) + H2O = 2-hexadecanoyl-sn-glycero-3-phospho-(1D-myo-inositol) + hexadecanoate + H(+). The enzyme catalyses a 1-acyl-2-(5Z,8Z,11Z,14Z)-eicosatetraenoyl-sn-glycero-3-phosphate + H2O = 2-(5Z,8Z,11Z,14Z-eicosatetraenoyl)-sn-glycero-3-phosphate + a fatty acid + H(+). It carries out the reaction 1-(9Z-octadecenoyl)-2-(7Z,10Z,13Z,16Z,19Z-docosapentaenoyl)-sn-glycero-3-phospho-1D-myo-inositol + H2O = 2-(7Z,10Z,13Z,16Z,19Z-docosapentaenoyl)-sn-glycero-3-phospho-1D-myo-inositol + (9Z)-octadecenoate + H(+). The catalysed reaction is 1-(9Z-octadecenoyl)-2-(5Z,8Z,11Z,14Z-eicosatetraenoyl)-sn-glycero-3-phospho-1D-myo-inositol + H2O = 2-(5Z,8Z,11Z,14Z-eicosatetraenoyl)-sn-glycero-3-phospho-(1D-myo-inositol) + (9Z)-octadecenoate + H(+). It catalyses the reaction 1,2-di-(9Z-octadecenoyl)-sn-glycero-3-phospho-1D-myo-inositol + H2O = 2-(9Z-octadecenoyl)-sn-glycero-3-phospho-1D-myo-inositol + (9Z)-octadecenoate + H(+). The enzyme catalyses 1-(9Z-octadecenoyl)-2-(8Z,11Z,14Z-eicosatrienoyl)-sn-glycero-3-phospho-1D-myo-inositol + H2O = 2-(8Z,11Z,14Z-eicosatrienoyl)-sn-glycero-3-phospho-1D-myo-inositol + (9Z)-octadecenoate + H(+). It carries out the reaction 1,2-di-(9Z-octadecenoyl)-sn-glycero-3-phosphate + H2O = 2-(9Z-octadecenoyl)-sn-glycero-3-phosphate + (9Z)-octadecenoate + H(+). The catalysed reaction is 1-hexadecanoyl-2-(9Z-octadecenoyl)-sn-glycero-3-phosphate + H2O = 2-(9Z-octadecenoyl)-sn-glycero-3-phosphate + hexadecanoate + H(+). It catalyses the reaction 1-hexadecanoyl-2-(9Z-octadecenoyl)-sn-glycero-3-phospho-L-serine + H2O = 2-(9Z-octadecenoyl)-sn-glycero-3-phospho-L-serine + hexadecanoate + H(+). The enzyme catalyses 1,2-di-(5Z,8Z,11Z,14Z)-eicosatetraenoyl-sn-glycero-3-phosphate + H2O = 2-(5Z,8Z,11Z,14Z-eicosatetraenoyl)-sn-glycero-3-phosphate + (5Z,8Z,11Z,14Z)-eicosatetraenoate + H(+). It carries out the reaction 1-octadecanoyl-2-(5Z,8Z,11Z,14Z-eicosatetraenoyl)-sn-glycero-3-phosphate + H2O = 2-(5Z,8Z,11Z,14Z-eicosatetraenoyl)-sn-glycero-3-phosphate + octadecanoate + H(+). The catalysed reaction is a 1,2-diacyl-sn-glycero-3-phospho-L-serine + H2O = a 2-acyl-sn-glycero-3-phospho-L-serine + a fatty acid + H(+). It catalyses the reaction a 1,2-diacyl-sn-glycero-3-phosphocholine + H2O = a 2-acyl-sn-glycero-3-phosphocholine + a fatty acid + H(+). The enzyme catalyses 1,2-di-(9Z-octadecenoyl)-sn-glycero-3-phosphocholine + H2O = (9Z-octadecenoyl)-sn-glycero-3-phosphocholine + (9Z)-octadecenoate + H(+). It carries out the reaction a 1,2-diacyl-sn-glycero-3-phosphoethanolamine + H2O = a 2-acyl-sn-glycero-3-phosphoethanolamine + a fatty acid + H(+). The catalysed reaction is a 1,2-diacyl-sn-glycero-3-phospho-(1'-sn-glycerol) + H2O = 2-acyl-sn-glycero-3-phospho-(1'-sn-glycerol) + a fatty acid + H(+). It catalyses the reaction 1-hexadecanoyl-2-(9Z-octadecenoyl)-sn-glycero-3-phospho-(1'-sn-glycerol) + H2O = 2-(9Z-octadecenoyl)-sn-glycero-3-phospho-(1'-sn-glycerol) + hexadecanoate + H(+). The enzyme catalyses 1-acyl-2-(5Z,8Z,11Z,14Z-eicosatetraenoyl)-sn-glycero-3-phosphocholine + H2O = 2-(5Z,8Z,11Z,14Z)-eicosatetraenoyl-sn-glycero-3-phosphocholine + a fatty acid + H(+). It carries out the reaction 1-acyl-2-(5Z,8Z,11Z,14Z)-eicosatetraenoyl-sn-glycero-3-phosphoethanolamine + H2O = 2-(5Z,8Z,11Z,14Z)-eicosatetraenoyl-sn-glycero-3-phosphoethanolamine + a fatty acid + H(+). It functions in the pathway phospholipid metabolism; phosphatidylinositol metabolism. Functionally, phospholipase A1 (PLA1) that hydrolyzes ester bonds at the sn-1 position of glycerophospholipids producing a free fatty acid and a lysophospholipid. Prefers phosphatidate (1,2-diacyl-sn-glycero-3-phosphate, PA) as substrate in vitro, but can efficiently hydrolyze phosphatidylinositol (1,2-diacyl-sn-glycero-3-phospho-(1D-myo-inositol), PI), as well as a range of other glycerophospholipid substrates such as phosphatidylcholine (1,2-diacyl-sn-glycero-3-phosphocholine, PC), phosphatidylethanolamine (1,2-diacyl-sn-glycero-3-phosphoethanolamine, PE), phosphatidylserine (1,2-diacyl-sn-glycero-3-phospho-L-serine, PS) and phosphatidylglycerol (1,2-diacyl-sn-glycero-3-phospho-(1'-sn-glycerol), PG). Involved in the regulation of the endogenous content of polyunsaturated PI and PS lipids in the nervous system. Changes in these lipids extend to downstream metabolic products like PI phosphates PIP and PIP2, which play fundamental roles in cell biology. Regulates mitochondrial morphology. These dynamic changes may be due to PA hydrolysis at the mitochondrial surface. May play a regulatory role in spermatogenesis or sperm function. The protein is Phospholipase DDHD1 of Mus musculus (Mouse).